Consider the following 328-residue polypeptide: MDRHNHVVFSLSKTHDLVSRICQKLKMPMGLITHNEFADGETYIRFEESVRNKDVFIFQSTCAPVNDSLMELLIAIDALKRGSAKSITAILPYYGYARQDRKTMGREPITSKLVADLLTTAGVSRVALTDIHSDQTQGFFNIPVDTLRTYHVFLTRTVELLGKKDLVVVSPDYGGVKRARLIATSLELPLAIIDKRRPAHNVAESINVLGEVANKNCLIVDDMIDTGGTVIAAAKLLREHHAKKVCVMATHGLFNGEAPQRFQKAFNEGLVDYLFVSNSIPQTKFDQCPQFQVIDLAPLFEEVLLCYANNSSISAIYTRHIEWIKKHV.

ATP-binding positions include 39 to 41 and 98 to 99; these read DGE and RQ. Mg(2+)-binding residues include H132 and D172. The active site involves K195. D-ribose 5-phosphate-binding positions include R197, D221, and 225-229; that span reads DTGGT.

The protein belongs to the ribose-phosphate pyrophosphokinase family. Class I subfamily. As to quaternary structure, homohexamer. Mg(2+) serves as cofactor.

It is found in the cytoplasm. The enzyme catalyses D-ribose 5-phosphate + ATP = 5-phospho-alpha-D-ribose 1-diphosphate + AMP + H(+). It participates in metabolic intermediate biosynthesis; 5-phospho-alpha-D-ribose 1-diphosphate biosynthesis; 5-phospho-alpha-D-ribose 1-diphosphate from D-ribose 5-phosphate (route I): step 1/1. In terms of biological role, involved in the biosynthesis of the central metabolite phospho-alpha-D-ribosyl-1-pyrophosphate (PRPP) via the transfer of pyrophosphoryl group from ATP to 1-hydroxyl of ribose-5-phosphate (Rib-5-P). This chain is Ribose-phosphate pyrophosphokinase, found in Mycoplasma pneumoniae (strain ATCC 29342 / M129 / Subtype 1) (Mycoplasmoides pneumoniae).